A 461-amino-acid chain; its full sequence is Lysosomal proton-coupled steroid conjugate and bile acid symporter SLC46A3 (461 aa).

Positions 1-25 (MKIPFVEPVICLSVFAVTLNSPLTT) are cleaved as a signal peptide. The Extracellular segment spans residues 26–70 (QYVYRRIWEETGNYSIALESNTSECAKNKSSPIFAFQEEVQKKVS). N-linked (GlcNAc...) asparagine glycans are attached at residues Asn-38, Asn-46, and Asn-53. The chain crosses the membrane as a helical span at residues 71-91 (LFNLEMDISGLIPGLVSTFVF). Topologically, residues 92 to 101 (LSHSDHGGRK) are cytoplasmic. The helical transmembrane segment at 102–124 (FPLILSSVGALANSAWLCLLSYF) threads the bilayer. Topologically, residues 125–133 (ALPIQLLIA) are extracellular. A helical transmembrane segment spans residues 134 to 156 (STFIGALFGNYTTFLGASFAYIV). Residues 157 to 170 (DQCKEKKQRTIRIA) lie on the Cytoplasmic side of the membrane. The helical transmembrane segment at 171–191 (IIDFLFGVVSGLTGLSSGYFI) threads the bilayer. Over 192–195 (RGLG) the chain is Extracellular. A helical membrane pass occupies residues 196 to 216 (FVWSFLIVTVALFVNLIYILL). Over 217-261 (FLEDSMKESSSQNISVSWTETFKNLFHRTYMLFKNASGEQQSLCC) the chain is Cytoplasmic. The helical transmembrane segment at 262-282 (LLLFTMITYFFVTIGVSPIFV) threads the bilayer. Residues 283–294 (LYELDSPLCWDE) are Extracellular-facing. A helical membrane pass occupies residues 295–315 (VLIGYGSALGSVTFFSSFLGI). Residues 316 to 324 (WLFSYCMED) lie on the Cytoplasmic side of the membrane. Residues 325 to 345 (IHMAFIGTFTTMVGMAMTAFA) form a helical membrane-spanning segment. Residues 346–347 (RT) are Extracellular-facing. Residues 348 to 368 (TLMMFLVRLPFLFTVMPLSVL) traverse the membrane as a helical segment. Over 369–382 (RSMISKVVHSTEQG) the chain is Cytoplasmic. A helical transmembrane segment spans residues 383–403 (TMFACLAFLETLGGITAVSTF). The Extracellular portion of the chain corresponds to 404 to 415 (NGIYSATVAWCK). The helical transmembrane segment at 416–436 (GFVFLLSAVLLLIPAISLCVI) threads the bilayer. At 437–461 (KYVSRNTGSYVLLIQEESSEDTSDR) the chain is on the cytoplasmic side. Residues 446–449 (YVLL) carry the Tyrosine-based lysosomal-sorting motif motif.

The protein belongs to the major facilitator superfamily. SLC46A family.

The protein localises to the lysosome membrane. It catalyses the reaction estrone 3-sulfate(out) + n H(+)(out) = estrone 3-sulfate(in) + n H(+)(in). The enzyme catalyses 25-hydroxyvitamin D3 sulfate(out) + n H(+)(out) = 25-hydroxyvitamin D3 sulfate(in) + n H(+)(in). The catalysed reaction is cholate(out) + n H(+)(out) = cholate(in) + n H(+)(in). It carries out the reaction glycocholate(out) + n H(+)(out) = glycocholate(in) + n H(+)(in). It catalyses the reaction taurocholate(out) + n H(+)(out) = taurocholate(in) + n H(+)(in). The enzyme catalyses dehydroepiandrosterone 3-sulfate(out) + n H(+)(out) = dehydroepiandrosterone 3-sulfate(in) + n H(+)(in). The catalysed reaction is N-acetyl-D-muramoyl-L-alanyl-D-isoglutamine(out) + n H(+)(out) = N-acetyl-D-muramoyl-L-alanyl-D-isoglutamine(in) + n H(+)(in). It carries out the reaction 2',3'-cGAMP(out) + n H(+)(out) = 2',3'-cGAMP(in) + n H(+)(in). Functionally, lysosomal proton-coupled steroid conjugate and bile acid transporter. Preferentially recognizes lipophilic steroid conjugates or bile acis as endogenous substrates and seems to mediate escape from lysosomes to the cytoplasm. Modulates hepatic cytosolic copper homeostasis, maybe acting as a lysosomal copper transporter and sequestering copper ions in the lysosome. Delivers pathogen-associated molecular patterns to cytosolic pattern recognition receptors as part of the innate immune response to microbes. Selectively transports bacterial muramyl dipeptide (MDP) into the cytosol for recognition by NOD2, triggering inflammatory responses. Likely acts as a redundant importer of cyclic GMP-AMP dinucleotides (cGAMPs) in monocyte and macrophage cell lineages. The transport mechanism, its electrogenicity and stoichiometry remain to be elucidated. The protein is Lysosomal proton-coupled steroid conjugate and bile acid symporter SLC46A3 (SLC46A3) of Bos taurus (Bovine).